Here is a 465-residue protein sequence, read N- to C-terminus: Soluble pyridine nucleotide transhydrogenase (465 aa).

An FAD-binding site is contributed by 36–45; that stretch reads ERYDNVGGGC.

Belongs to the class-I pyridine nucleotide-disulfide oxidoreductase family. The cofactor is FAD.

It localises to the cytoplasm. It carries out the reaction NAD(+) + NADPH = NADH + NADP(+). In terms of biological role, conversion of NADPH, generated by peripheral catabolic pathways, to NADH, which can enter the respiratory chain for energy generation. The polypeptide is Soluble pyridine nucleotide transhydrogenase (Sodalis glossinidius (strain morsitans)).